Here is a 548-residue protein sequence, read N- to C-terminus: Alpha-1,3-mannosyl-glycoprotein 4-beta-N-acetylglucosaminyltransferase B (548 aa).

At 1-7 (MRLRNGT) the chain is on the cytoplasmic side. The chain crosses the membrane as a helical; Signal-anchor for type II membrane protein span at residues 8-28 (FLTLLLFCLCAFLSLSWYAAL). Topologically, residues 29-548 (SGQKGDVVDV…LSEIFLKKAD (520 aa)) are lumenal. Positions 36-83 (VDVYQREFLALRDRLHAAEQESLKRSKELNLVLDEIKRAVSERQALRD) form a coiled coil. 2 N-linked (GlcNAc...) asparagine glycosylation sites follow: Asn-87 and Asn-103.

This sequence belongs to the glycosyltransferase 54 family. Interacts with SLC35A3. Requires a divalent metal cation as cofactor. N-glycosylated. In terms of tissue distribution, widely expressed. Strongly overexpressed in pancreatic cancer.

It is found in the golgi apparatus membrane. The enzyme catalyses an N(4)-{beta-D-GlcNAc-(1-&gt;2)-alpha-D-Man-(1-&gt;3)-[alpha-D-Man-(1-&gt;6)]-beta-D-Man-(1-&gt;4)-beta-D-GlcNAc-(1-&gt;4)-beta-D-GlcNAc}-L-asparaginyl-[protein] + UDP-N-acetyl-alpha-D-glucosamine = an N(4)-{beta-D-GlcNAc-(1-&gt;2)-[beta-D-GlcNAc-(1-&gt;4)]-alpha-D-Man-(1-&gt;3)-[alpha-D-Man-(1-&gt;6)]-beta-D-Man-(1-&gt;4)-beta-D-GlcNAc-(1-&gt;4)-beta-D-GlcNAc}-L-asparaginyl-[protein] + UDP + H(+). The catalysed reaction is N(4)-{beta-D-GlcNAc-(1-&gt;2)-alpha-D-Man-(1-&gt;3)-[beta-D-GlcNAc-(1-&gt;2)-alpha-D-Man-(1-&gt;6)]-beta-D-Man-(1-&gt;4)-beta-D-GlcNAc-(1-&gt;4)-beta-D-GlcNAc}-L-asparaginyl-[protein] + UDP-N-acetyl-alpha-D-glucosamine = N(4)-{beta-D-GlcNAc-(1-&gt;2)-[beta-D-GlcNAc-(1-&gt;4)]-alpha-D-Man-(1-&gt;3)-[beta-D-GlcNAc-(1-&gt;2)-alpha-D-Man-(1-&gt;6)]-beta-D-Man-(1-&gt;4)-beta-D-GlcNAc-(1-&gt;4)-beta-D-GlcNAc}-L-asparaginyl-[protein] + UDP + H(+). It carries out the reaction an N(4)-{beta-D-GlcNAc-(1-&gt;2)-alpha-D-Man-(1-&gt;3)-[beta-D-GlcNAc-(1-&gt;2)-[beta-D-GlcNAc-(1-&gt;6)]-alpha-D-Man-(1-&gt;6)]-beta-D-Man-(1-&gt;4)-beta-D-GlcNAc-(1-&gt;4)-beta-D-GlcNAc}-L-asparaginyl-[protein] + UDP-N-acetyl-alpha-D-glucosamine = an N(4)-{beta-D-GlcNAc-(1-&gt;2)-[beta-D-GlcNAc-(1-&gt;4)]-alpha-D-Man-(1-&gt;3)-[beta-D-GlcNAc-(1-&gt;2)-[beta-D-GlcNAc-(1-&gt;6)]-alpha-D-Man-(1-&gt;6)]-beta-D-Man-(1-&gt;4)-beta-D-GlcNAc-(1-&gt;4)-beta-D-GlcNAc}-L-asparaginyl-[protein] + UDP + H(+). It catalyses the reaction an N(4)-{beta-D-GlcNAc-(1-&gt;2)-alpha-D-Man-(1-&gt;3)-[beta-D-GlcNAc-(1-&gt;2)-alpha-D-Man-(1-&gt;6)]-beta-D-Man-(1-&gt;4)-beta-D-GlcNAc-(1-&gt;4)-[alpha-L-Fuc-(1-&gt;6)]-beta-D-GlcNAc}-L-asparaginyl-[protein] + UDP-N-acetyl-alpha-D-glucosamine = N(4)-{beta-D-GlcNAc-(1-&gt;2)-[beta-D-GlcNAc-(1-&gt;4)]-alpha-D-Man-(1-&gt;3)-[beta-D-GlcNAc-(1-&gt;2)-alpha-D-Man-(1-&gt;6)]-beta-D-Man-(1-&gt;4)-beta-D-GlcNAc-(1-&gt;4)-[alpha-L-Fuc-(1-&gt;6)]-beta-D-GlcNAc}-asparaginyl-[protein] + UDP + H(+). The enzyme catalyses an N(4)-{beta-D-GlcNAc-(1-&gt;2)-alpha-D-Man-(1-&gt;3)-[beta-D-Gal-(1-&gt;4)-beta-D-GlcNAc-(1-&gt;2)-alpha-D-Man-(1-&gt;6)]-beta-D-Man-(1-&gt;4)-beta-D-GlcNAc-(1-&gt;4)-beta-D-GlcNAc}-L-asparaginyl-[protein] + UDP-N-acetyl-alpha-D-glucosamine = an N(4)-{beta-D-GlcNAc-(1-&gt;2)-[beta-D-GlcNAc-(1-&gt;4)]-alpha-D-Man-(1-&gt;3)-[beta-D-Gal-(1-&gt;4)-beta-D-GlcNAc-(1-&gt;2)-alpha-D-Man-(1-&gt;6)]-beta-D-Man-(1-&gt;4)-beta-D-GlcNAc-(1-&gt;4)-beta-D-GlcNAc}-L-asparaginyl-[protein] + UDP + H(+). The catalysed reaction is N(4)-{beta-D-GlcNAc-(1-&gt;2)-alpha-D-Man-(1-&gt;3)-[alpha-D-Man-(1-&gt;3)-{alpha-D-Man-(1-&gt;6)}-alpha-D-Man-(1-&gt;6)]-beta-D-Man-(1-&gt;4)-beta-D-GlcNAc-(1-&gt;4)-beta-D-GlcNAc}-asparaginyl-[protein] + UDP-N-acetyl-alpha-D-glucosamine = N(4)-{beta-D-GlcNAc-(1-&gt;2)-[beta-D-GlcNAc-(1-&gt;4)]-alpha-D-Man-(1-&gt;3)-[alpha-D-Man-(1-&gt;3)-{alpha-D-Man-(1-&gt;6)}-alpha-D-Man-(1-&gt;6)]-beta-D-Man-(1-&gt;4)-beta-D-GlcNAc-(1-&gt;4)-beta-D-GlcNAc}-asparaginyl-[protein] + UDP + H(+). It carries out the reaction N(4)-{beta-D-GlcNAc-(1-&gt;2)-alpha-D-Man-(1-&gt;3)-beta-D-Man-(1-&gt;4)-beta-D-GlcNAc-(1-&gt;4)-beta-D-GlcNAc}-asparaginyl-[protein] + UDP-N-acetyl-alpha-D-glucosamine = N(4)-{beta-D-GlcNAc-(1-&gt;2)-[beta-D-GlcNAc-(1-&gt;4)]-alpha-D-Man-(1-&gt;3)-beta-D-Man-(1-&gt;4)-beta-D-GlcNAc-(1-&gt;4)-beta-D-GlcNAc}-asparaginyl-[protein] + UDP + H(+). Its pathway is protein modification; protein glycosylation. Glycosyltransferase that catalyzes the transfer of GlcNAc from UDP-GlcNAc to the GlcNAcbeta1-2Manalpha1-3 arm of the core structure of N-linked glycans through a beta1-4 linkage and participates in the production of tri- and tetra-antennary N-linked sugar chains. Prefers complex-type N-glycans over hybrid-types. Has lower affinities for donors or acceptors than MGAT4A, suggesting that, under physiological conditions, it is not the main contributor in N-glycan biosynthesis. This chain is Alpha-1,3-mannosyl-glycoprotein 4-beta-N-acetylglucosaminyltransferase B, found in Homo sapiens (Human).